The primary structure comprises 330 residues: DNA-directed RNA polymerase subunit alpha (330 aa).

The segment at 1–236 (MQGSVTEFLK…EQLDAFVDLR (236 aa)) is alpha N-terminal domain (alpha-NTD). The interval 250-330 (FDPILLRPVD…NWPPASIAED (81 aa)) is alpha C-terminal domain (alpha-CTD).

The protein belongs to the RNA polymerase alpha chain family. Homodimer. The RNAP catalytic core consists of 2 alpha, 1 beta, 1 beta' and 1 omega subunit. When a sigma factor is associated with the core the holoenzyme is formed, which can initiate transcription.

It catalyses the reaction RNA(n) + a ribonucleoside 5'-triphosphate = RNA(n+1) + diphosphate. Its function is as follows. DNA-dependent RNA polymerase catalyzes the transcription of DNA into RNA using the four ribonucleoside triphosphates as substrates. The polypeptide is DNA-directed RNA polymerase subunit alpha (Vibrio campbellii (strain ATCC BAA-1116)).